The primary structure comprises 476 residues: mRNA-capping enzyme subunit beta (476 aa).

The interval 1–133 is disordered; that stretch reads MNVGSILNDE…KLKSTNKPRR (133 aa). Basic and acidic residues-rich tracts occupy residues 51–67 and 105–114; these read LKTKETKKDWSEDEHSN and HPIEQDKSEK. The segment covering 123–132 has biased composition (basic residues); that stretch reads SKLKSTNKPR.

It belongs to the fungal TPase family. As to quaternary structure, heterodimer. The mRNA-capping enzyme is composed of two separate chains alpha and beta, respectively a mRNA guanylyltransferase and an mRNA 5'-triphosphate monophosphatase. It depends on Mg(2+) as a cofactor.

The protein localises to the nucleus. It carries out the reaction a 5'-end triphospho-ribonucleoside in mRNA + H2O = a 5'-end diphospho-ribonucleoside in mRNA + phosphate + H(+). First step of mRNA capping. Converts the 5'-triphosphate end of a nascent mRNA chain into a diphosphate end. This chain is mRNA-capping enzyme subunit beta (CET1), found in Debaryomyces hansenii (strain ATCC 36239 / CBS 767 / BCRC 21394 / JCM 1990 / NBRC 0083 / IGC 2968) (Yeast).